Reading from the N-terminus, the 122-residue chain is Large ribosomal subunit protein uL14c (122 aa).

The protein belongs to the universal ribosomal protein uL14 family. Part of the 50S ribosomal subunit.

The protein resides in the plastid. The protein localises to the chloroplast. Its function is as follows. Binds to 23S rRNA. This chain is Large ribosomal subunit protein uL14c, found in Zygnema circumcarinatum (Green alga).